A 340-amino-acid chain; its full sequence is Uroporphyrinogen decarboxylase (340 aa).

Substrate-binding positions include 21-25 (RQAGR), phenylalanine 40, aspartate 71, tyrosine 147, serine 202, and histidine 316.

It belongs to the uroporphyrinogen decarboxylase family. Homodimer.

It is found in the cytoplasm. The catalysed reaction is uroporphyrinogen III + 4 H(+) = coproporphyrinogen III + 4 CO2. Its pathway is porphyrin-containing compound metabolism; protoporphyrin-IX biosynthesis; coproporphyrinogen-III from 5-aminolevulinate: step 4/4. In terms of biological role, catalyzes the decarboxylation of four acetate groups of uroporphyrinogen-III to yield coproporphyrinogen-III. The sequence is that of Uroporphyrinogen decarboxylase from Wolinella succinogenes (strain ATCC 29543 / DSM 1740 / CCUG 13145 / JCM 31913 / LMG 7466 / NCTC 11488 / FDC 602W) (Vibrio succinogenes).